The following is a 168-amino-acid chain: Plastocyanin B, chloroplastic (168 aa).

Residues Met-1 to Ala-69 constitute a chloroplast transit peptide. In terms of domain architecture, Plastocyanin-like spans Val-70–Asn-168. Cu cation-binding residues include His-106, Cys-153, His-156, and Met-161.

The protein belongs to the plastocyanin family. Requires Cu(2+) as cofactor.

It is found in the plastid. Its subcellular location is the chloroplast thylakoid membrane. Functionally, participates in electron transfer between P700 and the cytochrome b6-f complex in photosystem I. This chain is Plastocyanin B, chloroplastic (PETE), found in Populus nigra (Lombardy poplar).